Reading from the N-terminus, the 197-residue chain is Phospholipid hydroperoxide glutathione peroxidase (197 aa).

Phosphoserine is present on Ser-40. The active site involves Sec-73. A non-standard amino acid (selenocysteine) is located at residue Sec-73.

Belongs to the glutathione peroxidase family. As to quaternary structure, monomer. Has a tendency to form higher mass oligomers. Interacts with FUNDC1; this interaction promotes GPX4 recruitment into mitochondria through TOM/TIM complex where it is degraded by mitophagy.

The protein localises to the mitochondrion. Its subcellular location is the cytoplasm. The enzyme catalyses a hydroperoxy polyunsaturated fatty acid + 2 glutathione = a hydroxy polyunsaturated fatty acid + glutathione disulfide + H2O. The catalysed reaction is 2 glutathione + H2O2 = glutathione disulfide + 2 H2O. It catalyses the reaction tert-butyl hydroperoxide + 2 glutathione = tert-butanol + glutathione disulfide + H2O. It carries out the reaction cumene hydroperoxide + 2 glutathione = 2-phenylpropan-2-ol + glutathione disulfide + H2O. The enzyme catalyses (9S)-hydroperoxy-(10E,12Z)-octadecadienoate + 2 glutathione = (9S)-hydroxy-(10E,12Z)-octadecadienoate + glutathione disulfide + H2O. The catalysed reaction is (13S)-hydroperoxy-(9Z,11E)-octadecadienoate + 2 glutathione = (13S)-hydroxy-(9Z,11E)-octadecadienoate + glutathione disulfide + H2O. It catalyses the reaction (5S)-hydroperoxy-(6E,8Z,11Z,14Z)-eicosatetraenoate + 2 glutathione = (5S)-hydroxy-(6E,8Z,11Z,14Z)-eicosatetraenoate + glutathione disulfide + H2O. It carries out the reaction (12R)-hydroperoxy-(5Z,8Z,10E,14Z)-eicosatetraenoate + 2 glutathione = (12R)-hydroxy-(5Z,8Z,10E,14Z)-eicosatetraenoate + glutathione disulfide + H2O. The enzyme catalyses (12S)-hydroperoxy-(5Z,8Z,10E,14Z)-eicosatetraenoate + 2 glutathione = (12S)-hydroxy-(5Z,8Z,10E,14Z)-eicosatetraenoate + glutathione disulfide + H2O. The catalysed reaction is (15S)-hydroperoxy-(5Z,8Z,11Z,13E)-eicosatetraenoate + 2 glutathione = (15S)-hydroxy-(5Z,8Z,11Z,13E)-eicosatetraenoate + glutathione disulfide + H2O. It catalyses the reaction (5S)-hydroperoxy-(6E,8Z,11Z,14Z,17Z)-eicosapentaenoate + 2 glutathione = (5S)-hydroxy-(6E,8Z,11Z,14Z,17Z)-eicosapentaenoate + glutathione disulfide + H2O. It carries out the reaction (12S)-hydroperoxy-(5Z,8Z,10E,14Z,17Z)-eicosapentaenoate + 2 glutathione = (12S)-hydroxy-(5Z,8Z,10E,14Z,17Z)-eicosapentaenoate + glutathione disulfide + H2O. The enzyme catalyses (15S)-hydroperoxy-(5Z,8Z,11Z,13E,17Z)-eicosapentaenoate + 2 glutathione = (15S)-hydroxy-(5Z,8Z,11Z,13E,17Z)-eicosapentaenoate + glutathione disulfide + H2O. The catalysed reaction is (15S)-hydroperoxy-(11Z,13E)-eicosadienoate + 2 glutathione = (15S)-hydroxy-(11Z,13E)-eicosadienoate + glutathione disulfide + H2O. It catalyses the reaction (17S)-hydroperoxy-(4Z,7Z,10Z,13Z,15E,19Z)-docosahexaenoate + 2 glutathione = (17S)-hydroxy-(4Z,7Z,10Z,13Z,15E,19Z)-docosahexaenoate + glutathione disulfide + H2O. It carries out the reaction a hydroperoxy-1,2-diacyl-glycero-3-phosphocholine + 2 glutathione = a hydroxy-1,2-diacyl-glycero-3-phosphocholine + glutathione disulfide + H2O. Essential antioxidant peroxidase that directly reduces phospholipid hydroperoxide even if they are incorporated in membranes and lipoproteins. Can also reduce fatty acid hydroperoxide, cholesterol hydroperoxide and thymine hydroperoxide. Plays a key role in protecting cells from oxidative damage by preventing membrane lipid peroxidation. Required to prevent cells from ferroptosis, a non-apoptotic cell death resulting from an iron-dependent accumulation of lipid reactive oxygen species. The presence of selenocysteine (Sec) versus Cys at the active site is essential for life: it provides resistance to overoxidation and prevents cells against ferroptosis. The presence of Sec at the active site is also essential for the survival of a specific type of parvalbumin-positive interneurons, thereby preventing against fatal epileptic seizures. May be required to protect cells from the toxicity of ingested lipid hydroperoxides. Required for normal sperm development and male fertility. Essential for maturation and survival of photoreceptor cells. Plays a role in a primary T-cell response to viral and parasitic infection by protecting T-cells from ferroptosis and by supporting T-cell expansion. Plays a role of glutathione peroxidase in platelets in the arachidonic acid metabolism. Reduces hydroperoxy ester lipids formed by a 15-lipoxygenase that may play a role as down-regulator of the cellular 15-lipoxygenase pathway. Can also reduce small soluble hydroperoxides such as H2O2, cumene hydroperoxide and tert-butyl hydroperoxide. The protein is Phospholipid hydroperoxide glutathione peroxidase of Bos taurus (Bovine).